Reading from the N-terminus, the 142-residue chain is Small ribosomal subunit protein uS12 (142 aa).

Belongs to the universal ribosomal protein uS12 family. In terms of assembly, part of the 30S ribosomal subunit.

Functionally, with S4 and S5 plays an important role in translational accuracy. Located at the interface of the 30S and 50S subunits. In Methanosarcina mazei (strain ATCC BAA-159 / DSM 3647 / Goe1 / Go1 / JCM 11833 / OCM 88) (Methanosarcina frisia), this protein is Small ribosomal subunit protein uS12.